A 361-amino-acid polypeptide reads, in one-letter code: UDP-N-acetylglucosamine--N-acetylmuramyl-(pentapeptide) pyrophosphoryl-undecaprenol N-acetylglucosamine transferase (361 aa).

Residues 11-13 (TGG), Asn-124, Arg-162, Ser-193, and Gln-292 each bind UDP-N-acetyl-alpha-D-glucosamine.

It belongs to the glycosyltransferase 28 family. MurG subfamily.

The protein localises to the cell inner membrane. It catalyses the reaction di-trans,octa-cis-undecaprenyl diphospho-N-acetyl-alpha-D-muramoyl-L-alanyl-D-glutamyl-meso-2,6-diaminopimeloyl-D-alanyl-D-alanine + UDP-N-acetyl-alpha-D-glucosamine = di-trans,octa-cis-undecaprenyl diphospho-[N-acetyl-alpha-D-glucosaminyl-(1-&gt;4)]-N-acetyl-alpha-D-muramoyl-L-alanyl-D-glutamyl-meso-2,6-diaminopimeloyl-D-alanyl-D-alanine + UDP + H(+). It functions in the pathway cell wall biogenesis; peptidoglycan biosynthesis. Its function is as follows. Cell wall formation. Catalyzes the transfer of a GlcNAc subunit on undecaprenyl-pyrophosphoryl-MurNAc-pentapeptide (lipid intermediate I) to form undecaprenyl-pyrophosphoryl-MurNAc-(pentapeptide)GlcNAc (lipid intermediate II). The protein is UDP-N-acetylglucosamine--N-acetylmuramyl-(pentapeptide) pyrophosphoryl-undecaprenol N-acetylglucosamine transferase of Elusimicrobium minutum (strain Pei191).